Reading from the N-terminus, the 522-residue chain is Transcription factor SPT20 homolog (522 aa).

Ser284 is subject to Phosphoserine. Disordered stretches follow at residues 361–380 and 408–522; these read DEES…DHSN and PVKM…RHES. Low complexity predominate over residues 412–425; the sequence is SHSSSGSASLSQVS. A compositionally biased stretch (polar residues) spans 433–442; the sequence is TETVSVQSSV. The segment covering 458 to 467 has biased composition (low complexity); that stretch reads SSSGNSSSGN. The span at 481-492 shows a compositional bias: pro residues; it reads PTPPPSSKPPTI. Thr482 is subject to Phosphothreonine. The span at 506 to 522 shows a compositional bias: low complexity; the sequence is LSPAALSPASSSQRHES. Ser507 and Ser512 each carry phosphoserine.

It belongs to the SPT20 family. Interacts with ATG9A. Interacts with MAPK14.

Functionally, required for MAP kinase p38 (MAPK11, MAPK12, MAPK13 and/or MAPK14) activation during gastrulation. Required for down-regulation of E-cadherin during gastrulation by regulating E-cadherin protein level downstream from NCK-interacting kinase (NIK) and independently of the regulation of transcription by FGF signaling and Snail. Required for starvation-induced ATG9A trafficking during autophagy. The protein is Transcription factor SPT20 homolog (SUPT20H) of Pongo abelii (Sumatran orangutan).